Consider the following 609-residue polypeptide: Alpha-fetoprotein (609 aa).

A signal peptide spans 1–18; that stretch reads MKWVESIFLIFLLNFTES. Albumin domains follow at residues 19 to 210, 211 to 402, and 403 to 601; these read RTLH…ATVT, KELR…EELQ, and KYIQ…KLIS. Residue His22 participates in Cu(2+) binding. An N-linked (GlcNAc...) asparagine glycan is attached at Asn42. Disulfide bonds link Cys99–Cys114, Cys113–Cys124, Cys148–Cys193, Cys192–Cys201, Cys224–Cys270, Cys269–Cys277, Cys289–Cys303, and Cys302–Cys313. 3 positions are modified to phosphoserine: Ser111, Ser115, and Ser117. Asn251 is a glycosylation site (N-linked (GlcNAc...) asparagine). Phosphoserine is present on Ser344. Cystine bridges form between Cys384–Cys393, Cys416–Cys462, Cys461–Cys472, Cys485–Cys501, Cys500–Cys511, Cys538–Cys583, and Cys582–Cys591. Ser444 bears the Phosphoserine mark.

The protein belongs to the ALB/AFP/VDB family. Dimeric and trimeric forms have been found in addition to the monomeric form. Plasma. Synthesized by the fetal liver and yolk sac.

The protein resides in the secreted. Binds copper, nickel, and fatty acids as well as, and bilirubin less well than, serum albumin. The chain is Alpha-fetoprotein (AFP) from Pan troglodytes (Chimpanzee).